A 168-amino-acid chain; its full sequence is Vasopressin-neurophysin 2-copeptin (168 aa).

An N-terminal signal peptide occupies residues 1 to 23 (MLARMLNTTLSACFLSLLAFSSA). C24 and C29 are joined by a disulfide. G32 carries the post-translational modification Glycine amide. 7 disulfide bridges follow: C45-C89, C48-C62, C56-C79, C63-C69, C96-C108, C102-C120, and C109-C114. N-linked (GlcNAc...) asparagine glycosylation is present at N135.

Belongs to the vasopressin/oxytocin family. In terms of assembly, interacts with vasopressin receptors V1bR/AVPR1B (Ki=85 pM), V1aR/AVPR1A (Ki=0.6 nM) and V2R/AVPR2 (Ki=4.9 nM). Interacts with oxytocin receptor (OXTR) (Ki=110 nM).

Its subcellular location is the secreted. Functionally, neurophysin 2 specifically binds vasopressin. In terms of biological role, vasopressin has a direct antidiuretic action on the kidney, it also causes vasoconstriction of the peripheral vessels. Acts by binding to vasopressin receptors (V1bR/AVPR1B, V1aR/AVPR1A, and V2R/AVPR2). This is Vasopressin-neurophysin 2-copeptin (Avp) from Mus musculus (Mouse).